The following is a 134-amino-acid chain: uncharacterized protein (134 aa).

The protein belongs to the ycf68 family.

It localises to the plastid. The protein resides in the chloroplast. This is an uncharacterized protein from Saccharum hybrid (Sugarcane).